The primary structure comprises 113 residues: UPF0342 protein SEQ_0993 (113 aa).

The protein belongs to the UPF0342 family.

In Streptococcus equi subsp. equi (strain 4047), this protein is UPF0342 protein SEQ_0993.